A 148-amino-acid chain; its full sequence is tRNA-specific adenosine deaminase (148 aa).

Positions 1 to 116 constitute a CMP/dCMP-type deaminase domain; the sequence is MEQALKQARL…SNLRYFNSSA (116 aa). H48 serves as a coordination point for Zn(2+). The active-site Proton donor is E50. Zn(2+)-binding residues include C78 and C81.

The protein belongs to the cytidine and deoxycytidylate deaminase family. As to quaternary structure, homodimer. Zn(2+) is required as a cofactor.

It catalyses the reaction adenosine(34) in tRNA + H2O + H(+) = inosine(34) in tRNA + NH4(+). Its function is as follows. Catalyzes the deamination of adenosine to inosine at the wobble position 34 of tRNA(Arg2). This Rickettsia typhi (strain ATCC VR-144 / Wilmington) protein is tRNA-specific adenosine deaminase.